The chain runs to 417 residues: Gamma-glutamyl phosphate reductase (417 aa).

Belongs to the gamma-glutamyl phosphate reductase family.

The protein localises to the cytoplasm. The enzyme catalyses L-glutamate 5-semialdehyde + phosphate + NADP(+) = L-glutamyl 5-phosphate + NADPH + H(+). It participates in amino-acid biosynthesis; L-proline biosynthesis; L-glutamate 5-semialdehyde from L-glutamate: step 2/2. In terms of biological role, catalyzes the NADPH-dependent reduction of L-glutamate 5-phosphate into L-glutamate 5-semialdehyde and phosphate. The product spontaneously undergoes cyclization to form 1-pyrroline-5-carboxylate. The polypeptide is Gamma-glutamyl phosphate reductase (Haemophilus influenzae (strain ATCC 51907 / DSM 11121 / KW20 / Rd)).